A 427-amino-acid polypeptide reads, in one-letter code: Enolase (427 aa).

Residue glutamine 163 coordinates (2R)-2-phosphoglycerate. Catalysis depends on glutamate 205, which acts as the Proton donor. Positions 242, 285, and 312 each coordinate Mg(2+). The (2R)-2-phosphoglycerate site is built by lysine 337, arginine 366, serine 367, and lysine 388. The active-site Proton acceptor is lysine 337.

The protein belongs to the enolase family. It depends on Mg(2+) as a cofactor.

It localises to the cytoplasm. The protein localises to the secreted. It is found in the cell surface. The enzyme catalyses (2R)-2-phosphoglycerate = phosphoenolpyruvate + H2O. It participates in carbohydrate degradation; glycolysis; pyruvate from D-glyceraldehyde 3-phosphate: step 4/5. In terms of biological role, catalyzes the reversible conversion of 2-phosphoglycerate (2-PG) into phosphoenolpyruvate (PEP). It is essential for the degradation of carbohydrates via glycolysis. In Herminiimonas arsenicoxydans, this protein is Enolase.